A 119-amino-acid chain; its full sequence is Beta-2-microglobulin (119 aa).

The signal sequence occupies residues 1-20 (MFRSVALAVLALLFLSGLEA). The region spanning 25–114 (PKIQVYSRHP…VTLSGPRTVK (90 aa)) is the Ig-like C1-type domain. Cysteine 45 and cysteine 100 are disulfide-bonded.

It belongs to the beta-2-microglobulin family. In terms of assembly, heterodimer of an alpha chain and a beta chain. Beta-2-microglobulin is the beta-chain of major histocompatibility complex class I molecules.

The protein localises to the secreted. Component of the class I major histocompatibility complex (MHC). Involved in the presentation of peptide antigens to the immune system. This chain is Beta-2-microglobulin (B2M), found in Chlorocebus aethiops (Green monkey).